The sequence spans 593 residues: Mitosis inducer protein kinase cdr1 (593 aa).

The Protein kinase domain maps to Trp-12–Leu-258. ATP-binding positions include Leu-18–Val-26 and Lys-41. The active-site Proton acceptor is the Asp-128. Residue Ser-550 is modified to Phosphoserine.

This sequence belongs to the protein kinase superfamily. CAMK Ser/Thr protein kinase family. NIM1 subfamily. Interacts with msp1.

The enzyme catalyses L-seryl-[protein] + ATP = O-phospho-L-seryl-[protein] + ADP + H(+). It catalyses the reaction L-threonyl-[protein] + ATP = O-phospho-L-threonyl-[protein] + ADP + H(+). This protein, a dose-dependent mitotic inducer, appears to function as a negative regulator of mitosis inhibitor wee1 by phosphorylating and inactivating it. The chain is Mitosis inducer protein kinase cdr1 (cdr1) from Schizosaccharomyces pombe (strain 972 / ATCC 24843) (Fission yeast).